The primary structure comprises 1172 residues: Laminin subunit beta-3 (1172 aa).

Residues 1–17 (MRPFFLLCFALPGLLHA) form the signal peptide. Residues 22-249 (SRGACYPPVG…AVSQLRLQGS (228 aa)) enclose the Laminin N-terminal domain. N-linked (GlcNAc...) asparagine glycosylation occurs at N220. 24 disulfide bridges follow: C250–C259, C252–C279, C281–C290, C293–C313, C316–C325, C318–C343, C346–C355, C358–C376, C379–C392, C381–C399, C401–C410, C413–C428, C431–C444, C433–C451, C453–C462, C465–C478, C481–C493, C483–C500, C502–C511, C519–C531, C534–C546, C536–C553, C555–C564, and C567–C578. Laminin EGF-like domains lie at 250–315 (CFCH…ECQR), 316–378 (CDCN…TCIS), 379–430 (CECD…GCHR), 431–480 (CDCN…GCEP), 481–533 (CACD…GCRA), and 534–580 (CDCD…VCVA). The tract at residues 579 to 785 (VACHPCFQTY…SLPDLTPTFN (207 aa)) is domain II. Residue N604 is glycosylated (N-linked (GlcNAc...) asparagine). Residues 723 to 757 (EQSAQAAQQVSDSSRLLDQLRDSRREAERLVRQAG) adopt a coiled-coil conformation. The segment at 786 to 816 (KLCGNSRQMACTPISCPGELCPQDNGTACGS) is domain alpha. The N-linked (GlcNAc...) asparagine glycan is linked to N810. A domain I region spans residues 817-1170 (RCRGVLPRAG…INGRVLYYAT (354 aa)). Coiled coils occupy residues 831 to 884 (MAGQ…MEED) and 948 to 1133 (VLSQ…ELEL).

In terms of assembly, laminin is a complex glycoprotein, consisting of three different polypeptide chains (alpha, beta, gamma), which are bound to each other by disulfide bonds into a cross-shaped molecule comprising one long and three short arms with globules at each end. Beta-3 is a subunit of laminin-5 (laminin-332 or epiligrin/kalinin/nicein). Interacts with ECM1. Found in the basement membranes (major component).

The protein resides in the secreted. The protein localises to the extracellular space. It localises to the extracellular matrix. Its subcellular location is the basement membrane. In terms of biological role, binding to cells via a high affinity receptor, laminin is thought to mediate the attachment, migration and organization of cells into tissues during embryonic development by interacting with other extracellular matrix components. This Homo sapiens (Human) protein is Laminin subunit beta-3 (LAMB3).